Consider the following 289-residue polypeptide: ATP synthase subunit a (289 aa).

The next 6 membrane-spanning stretches (helical) occupy residues 43–63 (AFHV…VLIF), 101–121 (SAVI…MNAV), 160–180 (LSVF…GGFI), 193–213 (LFVQ…TLIA), 232–252 (VFIL…GLGV), and 259–279 (AVFH…LTIV).

The protein belongs to the ATPase A chain family. F-type ATPases have 2 components, CF(1) - the catalytic core - and CF(0) - the membrane proton channel. CF(1) has five subunits: alpha(3), beta(3), gamma(1), delta(1), epsilon(1). CF(0) has three main subunits: a(1), b(2) and c(9-12). The alpha and beta chains form an alternating ring which encloses part of the gamma chain. CF(1) is attached to CF(0) by a central stalk formed by the gamma and epsilon chains, while a peripheral stalk is formed by the delta and b chains.

The protein resides in the cell inner membrane. Its function is as follows. Key component of the proton channel; it plays a direct role in the translocation of protons across the membrane. This is ATP synthase subunit a from Pseudomonas syringae pv. syringae (strain B728a).